Reading from the N-terminus, the 83-residue chain is U5-theraphotoxin-Hs1b 2 (83 aa).

Positions 1–21 (MQTSMFLTLTGLVLLFVVCYA) are cleaved as a signal peptide. The propeptide occupies 22-49 (SESEEKEFPKELLSSIFAADSDFKEEER). 3 disulfides stabilise this stretch: Cys-51–Cys-63, Cys-56–Cys-68, and Cys-62–Cys-75.

This sequence belongs to the neurotoxin 10 (Hwtx-1) family. 51 (Hntx-8) subfamily. Hntx-8 sub-subfamily. Expressed by the venom gland.

The protein resides in the secreted. Functionally, agglutinates erythrocytes. This Cyriopagopus schmidti (Chinese bird spider) protein is U5-theraphotoxin-Hs1b 2.